We begin with the raw amino-acid sequence, 148 residues long: Arginine repressor (148 aa).

The protein belongs to the ArgR family.

It is found in the cytoplasm. It functions in the pathway amino-acid biosynthesis; L-arginine biosynthesis [regulation]. Regulates arginine biosynthesis genes. This chain is Arginine repressor, found in Chlorobium chlorochromatii (strain CaD3).